A 152-amino-acid chain; its full sequence is Large ribosomal subunit protein bL9 (152 aa).

It belongs to the bacterial ribosomal protein bL9 family.

Binds to the 23S rRNA. This is Large ribosomal subunit protein bL9 from Prochlorococcus marinus (strain SARG / CCMP1375 / SS120).